The chain runs to 298 residues: UDP-N-acetylenolpyruvoylglucosamine reductase (298 aa).

Positions 26 to 191 (KTGGEAEYLA…LSATFSLKPG (166 aa)) constitute an FAD-binding PCMH-type domain. Arg-170 is a catalytic residue. Ser-220 (proton donor) is an active-site residue. Glu-290 is an active-site residue.

The protein belongs to the MurB family. Requires FAD as cofactor.

It is found in the cytoplasm. The enzyme catalyses UDP-N-acetyl-alpha-D-muramate + NADP(+) = UDP-N-acetyl-3-O-(1-carboxyvinyl)-alpha-D-glucosamine + NADPH + H(+). The protein operates within cell wall biogenesis; peptidoglycan biosynthesis. Cell wall formation. The sequence is that of UDP-N-acetylenolpyruvoylglucosamine reductase from Lactobacillus acidophilus (strain ATCC 700396 / NCK56 / N2 / NCFM).